Reading from the N-terminus, the 368-residue chain is Ubl carboxyl-terminal hydrolase 18 (368 aa).

Residues 31 to 48 (MKRKRVLSRDLCSAWDSP) are mediates interaction with IFNAR2. Residues 48–109 (PHGLVGLHNI…LLLLLEKMQD (62 aa)) form a mediates interaction with STAT2 region. The region spanning 52 to 366 (VGLHNIGQTC…TAYLLVYTKT (315 aa)) is the USP domain. The active-site Nucleophile is the Cys61. A mediates interaction with STAT2 and necessary for the negative regulation of the type I IFN signaling pathway region spans residues 299 to 308 (ELFAVIAHVG). Residues 309–368 (MADFGHYCAYIRNPVDGKWFCFNDSHVCWVTWKDVQCTYGNHRYRWRETAYLLVYTKTGS) form a mediates interaction with IFNAR2 region. The Proton acceptor role is filled by His314.

It belongs to the peptidase C19 family. As to quaternary structure, interacts with STAT2; the interaction is direct. Interacts with IFNAR2; indirectly via STAT2, it negatively regulates the assembly of the ternary interferon-IFNAR1-IFNAR2 complex and inhibits type I interferon signaling. Interacts with STING1. Interacts with USP20.

The catalysed reaction is Thiol-dependent hydrolysis of ester, thioester, amide, peptide and isopeptide bonds formed by the C-terminal Gly of ubiquitin (a 76-residue protein attached to proteins as an intracellular targeting signal).. Its function is as follows. Interferon-induced ISG15-specific protease that plays a crucial role for maintaining a proper balance of ISG15-conjugated proteins in cells. Regulates protein ISGylation by efficiently cleaving ISG15 conjugates linked via isopeptide bonds. Regulates T-cell activation and T-helper 17 (Th17) cell differentiation by deubiquitinating TAK1, likely to keep TAK1-TAB complexes in steady conditions. In turn, restricts activation of NF-kappa-B, NFAT, and JNK as well as expression of IL2 in T-cells after TCR activation. Acts as a molecular adapter with USP20 to promote innate antiviral response through deubiquitinating STING1. Involved also in the negative regulation of the inflammatory response triggered by type I interferon. Upon recruitment by STAT2 to the type I interferon receptor subunit IFNAR2 interferes with the assembly of the ternary interferon-IFNAR1-IFNAR2 complex and acts as a negative regulator of the type I interferon signaling pathway. The polypeptide is Ubl carboxyl-terminal hydrolase 18 (Usp18) (Mus musculus (Mouse)).